We begin with the raw amino-acid sequence, 388 residues long: MAKKPKKLEEISKKFGAEREKALNDALKLIEKDFGKGSIMRLGERAEQKVQVMSSGSLALDIALGSGGYPKGRIIEIYGPESSGKTTVALHAVAQAQKEGGIAAFIDAEHALDPAYAAALGVNIDELLLSQPDSGEQGLEIAGKLIDSGAVDLVVVDSVAALVPRAEIDGDIGDSHVGLQARMMSQAMRKLGASINKTKTIAIFINQLREKVGVMFGNPETTPGGRALKFYASVRLDVRGNTQIKGTGDQKETNVGKETKIKVVKNKVAPPFKEAVVEIMYGEGISKTGELLKIASDLDIIKKAGAWYSYKDEKIGQGSENAKKYLAEHPEIFDEIDKQVRSKFGLIDGEEVSEQDTENKKDEPKKEEAVNEEVTLDLGDELEIEIEE.

79-86 provides a ligand contact to ATP; it reads GPESSGKT. Residues 347 to 372 form a disordered region; it reads IDGEEVSEQDTENKKDEPKKEEAVNE. Basic and acidic residues predominate over residues 357–369; sequence TENKKDEPKKEEA.

Belongs to the RecA family.

The protein resides in the cytoplasm. Its function is as follows. Can catalyze the hydrolysis of ATP in the presence of single-stranded DNA, the ATP-dependent uptake of single-stranded DNA by duplex DNA, and the ATP-dependent hybridization of homologous single-stranded DNAs. It interacts with LexA causing its activation and leading to its autocatalytic cleavage. The protein is Protein RecA of Streptococcus pneumoniae (strain CGSP14).